We begin with the raw amino-acid sequence, 158 residues long: Low molecular weight phosphotyrosine protein phosphatase (158 aa).

Ala2 carries the post-translational modification N-acetylalanine. Cys13 (nucleophile) is an active-site residue. The active site involves Arg19. Residue Asp130 is the Proton donor of the active site. Residues Tyr132 and Tyr133 each carry the phosphotyrosine modification.

It belongs to the low molecular weight phosphotyrosine protein phosphatase family. In terms of assembly, interacts with EPHA2; dephosphorylates EPHA2. Interacts with EPHB1. Interacts with the SH3 domain of SPTAN1. There is no interaction observed for isoforms 2 or 3. Post-translationally, phosphorylated by LCK. Phosphorylation at Tyr-132 increases its phosphatase activity. In terms of processing, not phosphorylated. As to expression, expressed in T-lymphocytes.

Its subcellular location is the cytoplasm. It catalyses the reaction O-phospho-L-tyrosyl-[protein] + H2O = L-tyrosyl-[protein] + phosphate. The enzyme catalyses a phosphate monoester + H2O = an alcohol + phosphate. Inhibited by sulfhydryl reagents. Functionally, acts on tyrosine phosphorylated proteins, low-MW aryl phosphates and natural and synthetic acyl phosphates with differences in substrate specificity between isoform 1 and isoform 2. Its function is as follows. Does not possess phosphatase activity. The chain is Low molecular weight phosphotyrosine protein phosphatase from Homo sapiens (Human).